Reading from the N-terminus, the 331-residue chain is Glyceraldehyde-3-phosphate dehydrogenase 3 (331 aa).

NAD(+)-binding positions include 11–12 (RI), aspartate 33, and glutamate 77. At serine 148 the chain carries Phosphoserine. D-glyceraldehyde 3-phosphate is bound at residue 148 to 150 (SCT). Catalysis depends on cysteine 149, which acts as the Nucleophile. Serine 177 bears the Phosphoserine mark. Threonine 179 contributes to the D-glyceraldehyde 3-phosphate binding site. At serine 200 the chain carries Phosphoserine. D-glyceraldehyde 3-phosphate is bound by residues 208–209 (TG) and arginine 231. Residue asparagine 313 participates in NAD(+) binding.

This sequence belongs to the glyceraldehyde-3-phosphate dehydrogenase family. As to quaternary structure, homotetramer.

The protein resides in the cytoplasm. It catalyses the reaction D-glyceraldehyde 3-phosphate + phosphate + NAD(+) = (2R)-3-phospho-glyceroyl phosphate + NADH + H(+). It functions in the pathway carbohydrate degradation; glycolysis; pyruvate from D-glyceraldehyde 3-phosphate: step 1/5. The protein is Glyceraldehyde-3-phosphate dehydrogenase 3 of Kluyveromyces marxianus (Yeast).